A 230-amino-acid chain; its full sequence is MSFKREGDDWSQLNVLKKRRVGDLLASYIPEDEALMLRDGRFACAICPHRPVLDTLAMLTAHRAGKKHLSSLQLFYGKKPPGKGTEQNPRQHNELRREETTAEAPLLTQTRLITQSALHRAPHYNSCCRRKYRPEAPRPSVSRPPLPPPEVEPQGGKISREPEPEAGSQTKESATVSSPAPMSPTRRRALDHYLTLRSSGWIPDGRGRWIKDENVEFDSDEEEPPDLPLD.

Phosphoserine is present on Ser2. The Bipartite nuclear localization signal motif lies at 4 to 20 (KREGDDWSQLNVLKKRR). The Matrin-type zinc finger occupies 42–74 (FACAICPHRPVLDTLAMLTAHRAGKKHLSSLQL). Residue Lys67 forms a Glycyl lysine isopeptide (Lys-Gly) (interchain with G-Cter in SUMO2) linkage. Disordered regions lie at residues 76 to 106 (YGKKPPGKGTEQNPRQHNELRREETTAEAPL) and 129 to 191 (RRKY…RALD). Residues 89 to 100 (PRQHNELRREET) are compositionally biased toward basic and acidic residues. Pro residues predominate over residues 142 to 151 (SRPPLPPPEV). The segment covering 167 to 180 (GSQTKESATVSSPA) has biased composition (polar residues). 2 positions are modified to phosphoserine: Ser183 and Ser219. The required for interaction with LUC7L2 stretch occupies residues 188–230 (RALDHYLTLRSSGWIPDGRGRWIKDENVEFDSDEEEPPDLPLD).

In terms of assembly, component of the minor spliceosome. Within this complex, interacts with RNF113A, as well as with SF3B1/SF3b155, SF3B2/SF3b145, SF3B3/SF3b130 and CDC5L. May interact with LUC7L2 and SNRNP70.

The protein resides in the nucleus. It is found in the nucleoplasm. It localises to the nucleus speckle. Functionally, as a component of the minor spliceosome, involved in the splicing of U12-type introns in pre-mRNAs. Plays a role in the regulation of primary cilia length and Hedgehog signaling. This Bos taurus (Bovine) protein is Sodium channel modifier 1 (SCNM1).